We begin with the raw amino-acid sequence, 571 residues long: Urease subunit alpha (571 aa).

In terms of domain architecture, Urease spans 133–571 (GGIDTHVHFV…LPLTQRYFLF (439 aa)). Histidine 138, histidine 140, and lysine 221 together coordinate Ni(2+). At lysine 221 the chain carries N6-carboxylysine. A substrate-binding site is contributed by histidine 223. 2 residues coordinate Ni(2+): histidine 250 and histidine 276. Residue histidine 324 is the Proton donor of the active site. Position 364 (aspartate 364) interacts with Ni(2+).

This sequence belongs to the metallo-dependent hydrolases superfamily. Urease alpha subunit family. Heterotrimer of UreA (gamma), UreB (beta) and UreC (alpha) subunits. Three heterotrimers associate to form the active enzyme. The cofactor is Ni cation. Post-translationally, carboxylation allows a single lysine to coordinate two nickel ions.

Its subcellular location is the cytoplasm. It carries out the reaction urea + 2 H2O + H(+) = hydrogencarbonate + 2 NH4(+). It functions in the pathway nitrogen metabolism; urea degradation; CO(2) and NH(3) from urea (urease route): step 1/1. The polypeptide is Urease subunit alpha (Staphylococcus xylosus).